Here is a 452-residue protein sequence, read N- to C-terminus: Phosphatidate cytidylyltransferase, mitochondrial (452 aa).

Belongs to the TAM41 family. Mg(2+) is required as a cofactor.

The protein resides in the mitochondrion inner membrane. It carries out the reaction a 1,2-diacyl-sn-glycero-3-phosphate + CTP + H(+) = a CDP-1,2-diacyl-sn-glycerol + diphosphate. It participates in phospholipid metabolism; CDP-diacylglycerol biosynthesis; CDP-diacylglycerol from sn-glycerol 3-phosphate: step 3/3. In terms of biological role, catalyzes the conversion of phosphatidic acid (PA) to CDP-diacylglycerol (CDP-DAG), an essential intermediate in the synthesis of phosphatidylglycerol, cardiolipin and phosphatidylinositol. The protein is Phosphatidate cytidylyltransferase, mitochondrial (TAMM41) of Homo sapiens (Human).